The following is a 129-amino-acid chain: Small ribosomal subunit protein uS9 (129 aa).

The protein belongs to the universal ribosomal protein uS9 family.

The sequence is that of Small ribosomal subunit protein uS9 from Helicobacter pylori (strain HPAG1).